Consider the following 190-residue polypeptide: UPF0340 protein BT9727_4999 (190 aa).

The protein belongs to the UPF0340 family.

This is UPF0340 protein BT9727_4999 from Bacillus thuringiensis subsp. konkukian (strain 97-27).